Here is a 324-residue protein sequence, read N- to C-terminus: Mating-type protein A-3 (324 aa).

The HMG box DNA-binding region spans Thr-147 to Tyr-215.

It is found in the nucleus. Its function is as follows. Required, together with mating-type protein A-2, for efficient ascospore formation. This is Mating-type protein A-3 (mtA-3) from Neurospora crassa (strain ATCC 24698 / 74-OR23-1A / CBS 708.71 / DSM 1257 / FGSC 987).